A 311-amino-acid polypeptide reads, in one-letter code: Energy-coupling factor transporter ATP-binding protein EcfA (311 aa).

Residues 2 to 237 (IELRDLSYSY…AELIRRASLR (236 aa)) form the ABC transporter domain. 35-42 (GPNGAGKS) lines the ATP pocket.

It belongs to the ABC transporter superfamily. Energy-coupling factor EcfA family. In terms of assembly, forms a stable energy-coupling factor (ECF) transporter complex composed of 2 membrane-embedded substrate-binding proteins (S component), 2 ATP-binding proteins (A component) and 2 transmembrane proteins (T component).

The protein localises to the cell membrane. Functionally, ATP-binding (A) component of a common energy-coupling factor (ECF) ABC-transporter complex. Unlike classic ABC transporters this ECF transporter provides the energy necessary to transport a number of different substrates. This chain is Energy-coupling factor transporter ATP-binding protein EcfA, found in Methanothermobacter thermautotrophicus (strain ATCC 29096 / DSM 1053 / JCM 10044 / NBRC 100330 / Delta H) (Methanobacterium thermoautotrophicum).